The chain runs to 141 residues: Chorion protein S16 (141 aa).

Positions 1–22 (MSANNMRLLCLLLACYISAIVA) are cleaved as a signal peptide.

The protein belongs to the chorion protein S16 family.

The protein resides in the secreted. Its function is as follows. Chorion membrane (egg shell) protein; plays a role in protecting the egg from the environment. The sequence is that of Chorion protein S16 (Cp16) from Drosophila subobscura (Fruit fly).